The sequence spans 513 residues: Glutamyl-tRNA(Gln) amidotransferase subunit A (513 aa).

Catalysis depends on charge relay system residues Lys-85 and Ser-160. Ser-184 (acyl-ester intermediate) is an active-site residue.

This sequence belongs to the amidase family. GatA subfamily. Heterotrimer of A, B and C subunits.

It catalyses the reaction L-glutamyl-tRNA(Gln) + L-glutamine + ATP + H2O = L-glutaminyl-tRNA(Gln) + L-glutamate + ADP + phosphate + H(+). Functionally, allows the formation of correctly charged Gln-tRNA(Gln) through the transamidation of misacylated Glu-tRNA(Gln) in organisms which lack glutaminyl-tRNA synthetase. The reaction takes place in the presence of glutamine and ATP through an activated gamma-phospho-Glu-tRNA(Gln). In Bifidobacterium longum (strain NCC 2705), this protein is Glutamyl-tRNA(Gln) amidotransferase subunit A.